The following is a 137-amino-acid chain: Putative pre-16S rRNA nuclease (137 aa).

This sequence belongs to the YqgF nuclease family.

Its subcellular location is the cytoplasm. Could be a nuclease involved in processing of the 5'-end of pre-16S rRNA. This chain is Putative pre-16S rRNA nuclease, found in Actinobacillus pleuropneumoniae serotype 5b (strain L20).